A 262-amino-acid polypeptide reads, in one-letter code: Adenosylcobinamide-GDP ribazoletransferase (262 aa).

Helical transmembrane passes span tyrosine 43–glutamine 63, leucine 66–phenylalanine 86, glycine 120–leucine 140, alanine 146–phenylalanine 166, leucine 191–leucine 211, and alanine 242–leucine 262.

This sequence belongs to the CobS family. Requires Mg(2+) as cofactor.

Its subcellular location is the cell inner membrane. It catalyses the reaction alpha-ribazole + adenosylcob(III)inamide-GDP = adenosylcob(III)alamin + GMP + H(+). The enzyme catalyses alpha-ribazole 5'-phosphate + adenosylcob(III)inamide-GDP = adenosylcob(III)alamin 5'-phosphate + GMP + H(+). It participates in cofactor biosynthesis; adenosylcobalamin biosynthesis; adenosylcobalamin from cob(II)yrinate a,c-diamide: step 7/7. Its function is as follows. Joins adenosylcobinamide-GDP and alpha-ribazole to generate adenosylcobalamin (Ado-cobalamin). Also synthesizes adenosylcobalamin 5'-phosphate from adenosylcobinamide-GDP and alpha-ribazole 5'-phosphate. In Shewanella baltica (strain OS185), this protein is Adenosylcobinamide-GDP ribazoletransferase.